The primary structure comprises 329 residues: D-threo-aldose 1-dehydrogenase (329 aa).

Tyr58 serves as the catalytic Proton donor. His145 contacts substrate.

It belongs to the aldo/keto reductase family.

It carries out the reaction a D-threo-aldose + NAD(+) = a D-threo-aldono-1,5-lactone + NADH + H(+). Inhibited strongly by Hg(2+), Cd(2+) and para-chloromercuribenzoic acid (PCMB) and weakly by Zn(2+) and iodoacetamide. Also inhibited strongly by L-xylose but not D-glucose. In terms of biological role, catalyzes the oxidation of L-fucose to L-fuconolactone in the presence of NADP(+). Also active against L-galactose and, to a much lesser degree, D-arabinose. Uses NADP(+) as a hydrogen acceptor much more efficiently than NAD(+). This Pseudomonas sp protein is D-threo-aldose 1-dehydrogenase.